We begin with the raw amino-acid sequence, 590 residues long: Leucine-rich repeat transmembrane neuronal protein 4 (590 aa).

The signal sequence occupies residues Met-1–Ala-30. Residues Gln-31 to Ile-59 form the LRRNT domain. Over Gln-31–Lys-424 the chain is Extracellular. Asn-58 is a glycosylation site (N-linked (GlcNAc...) asparagine). LRR repeat units lie at residues Ser-60–Gly-83, Leu-84–Gly-107, Ile-108–Pro-131, Val-132–Gly-155, Arg-157–Asp-179, Cys-180–Gly-203, Leu-205–Arg-227, Leu-228–Thr-251, Trp-252–Cys-275, and Leu-276–Ala-299. Asn-126 carries an N-linked (GlcNAc...) asparagine glycan. Residue Asn-291 is glycosylated (N-linked (GlcNAc...) asparagine). Residues Asn-311–Asp-362 enclose the LRRCT domain. Residues Ile-425–Val-445 traverse the membrane as a helical segment. The Cytoplasmic segment spans residues Ser-446 to Asn-590.

This sequence belongs to the LRRTM family. As to quaternary structure, peripherally associated with AMPAR complex. AMPAR complex consists of an inner core made of 4 pore-forming GluA/GRIA proteins (GRIA1, GRIA2, GRIA3 and GRIA4) and 4 major auxiliary subunits arranged in a twofold symmetry. One of the two pairs of distinct binding sites is occupied either by CNIH2, CNIH3 or CACNG2, CACNG3. The other harbors CACNG2, CACNG3, CACNG4, CACNG8 or GSG1L. This inner core of AMPAR complex is complemented by outer core constituents binding directly to the GluA/GRIA proteins at sites distinct from the interaction sites of the inner core constituents. Outer core constituents include at least PRRT1, PRRT2, CKAMP44/SHISA9, FRRS1L and NRN1. The proteins of the inner and outer core serve as a platform for other, more peripherally associated AMPAR constituents, including LRRTM4. Alone or in combination, these auxiliary subunits control the gating and pharmacology of the AMPAR complex and profoundly impact their biogenesis and protein processing. In terms of tissue distribution, expressed in the brain (at protein level).

Its subcellular location is the cell membrane. The protein localises to the postsynaptic cell membrane. Functionally, may play a role in the development and maintenance of the nervous system. Exhibits strong synaptogenic activity, restricted to excitatory presynaptic differentiation. This Rattus norvegicus (Rat) protein is Leucine-rich repeat transmembrane neuronal protein 4 (Lrrtm4).